We begin with the raw amino-acid sequence, 146 residues long: MKYQKSAEAIAKLSAEQYRVTQENGTERPGTGEYLYNKEPGIYVDIVSGEPLFASSDKYESHCGWPSFTKPIERANVTELTDMSHGMVRTEVRSAHGDSHLGHVFPDGPVDRGGLRYCINSASLRFVPKDRMEAEGYGDYLDQVEG.

Positions 6–129 constitute a MsrB domain; that stretch reads SAEAIAKLSA…NSASLRFVPK (124 aa). C118 functions as the Nucleophile in the catalytic mechanism.

The protein belongs to the MsrB Met sulfoxide reductase family.

The catalysed reaction is L-methionyl-[protein] + [thioredoxin]-disulfide + H2O = L-methionyl-(R)-S-oxide-[protein] + [thioredoxin]-dithiol. The polypeptide is Peptide methionine sulfoxide reductase MsrB (Brucella melitensis biotype 1 (strain ATCC 23456 / CCUG 17765 / NCTC 10094 / 16M)).